The sequence spans 243 residues: MSDRMAKFKAGMPKEVIDAMKQEFKDNYDTNKDGTVSCAELAKLMDCPEEEAQRIITGVDVNCDGRMQFDEFLLYMEGYTKERLYSSDEIKQMFDDLDKDGNGRISPDELSKGVGEISTKLVEGMANKLIQEADKDGDGHVNMEEFVDTLVAKLPLCFKKCFHEDFDKNGDGSLTNAEMSQLLNRNLPGQYSEELINEMISRVDLNGDGRVQFGEFLMHAQNLSKDDIKNQFMAIDKDKNGKI.

7 EF-hand domains span residues 15-49, 47-82, 85-120, 121-156, 157-189, 191-226, and 227-243; these read EVIDAMKQEFKDNYDTNKDGTVSCAELAKLMDCPE, CPEEEAQRIITGVDVNCDGRMQFDEFLLYMEGYTKE, YSSDEIKQMFDDLDKDGNGRISPDELSKGVGEISTK, LVEGMANKLIQEADKDGDGHVNMEEFVDTLVAKLPL, CFKKCFHEDFDKNGDGSLTNAEMSQLLNRNLPG, YSEELINEMISRVDLNGDGRVQFGEFLMHAQNLSKD, and DIKNQFMAIDKDKNGKI. Residues Asp29, Asn31, Asp33, Thr35, Glu40, Asp60, Asn62, Asp64, Arg66, Glu71, Asp98, Asp100, Asn102, Arg104, Glu109, Asp134, Asp136, Asp138, His140, Glu145, Asp167, Asn169, Asp171, Ser173, Glu178, Asp204, Asn206, Asp208, Arg210, and Glu215 each contribute to the Ca(2+) site.

As to expression, aboral ectoderm, a squamous epithelium covering the surface of the late stage embryo and larva.

In terms of biological role, calcium-binding protein involved in larval development and metamorphosis. Likely to function as calcium buffers mediating the transport of calcium from the sea water to the blastocoel where calcium is required for skeleton formation. The chain is Calcium-binding protein LPS1-beta from Lytechinus pictus (Painted sea urchin).